Here is a 514-residue protein sequence, read N- to C-terminus: 6-phosphofructo-2-kinase/fructose-2,6-bisphosphatase 3 (514 aa).

A 6-phosphofructo-2-kinase region spans residues 1 to 245; it reads MPLELTQSRV…VYYLMNIHVQ (245 aa). 42 to 50 serves as a coordination point for ATP; the sequence is GLPARGKTY. The beta-D-fructose 6-phosphate site is built by arginine 75 and arginine 99. Residue aspartate 125 is part of the active site. Residues threonine 127 and arginine 133 each coordinate beta-D-fructose 6-phosphate. Cysteine 155 is an active-site residue. 164 to 169 contributes to the ATP binding site; the sequence is NIMEVK. 3 residues coordinate beta-D-fructose 6-phosphate: lysine 169, arginine 190, and tyrosine 194. Residues 246-514 form a fructose-2,6-bisphosphatase region; it reads PRTIYLCRHG…QPLLGQACLT (269 aa). Arginine 253 contributes to the beta-D-fructose 2,6-bisphosphate binding site. Histidine 254 acts as the Tele-phosphohistidine intermediate in catalysis. Beta-D-fructose 2,6-bisphosphate contacts are provided by asparagine 260 and glycine 266. Glutamate 323 serves as the catalytic Proton donor/acceptor. Residues tyrosine 334, arginine 348, lysine 352, tyrosine 363, glutamine 389, and arginine 393 each coordinate beta-D-fructose 2,6-bisphosphate. Position 345–348 (345–348) interacts with ATP; it reads YALR. Residues 389-393 and tyrosine 425 each bind ATP; that span reads QAVLR. Residues 444-475 form a disordered region; that stretch reads ERSEDAKKGPNPLMRRNSVTPLASPEPTKKPR. Serine 461 carries the phosphoserine; by AMPK and PKA modification. Threonine 463 carries the post-translational modification Phosphothreonine. Serine 467 is subject to Phosphoserine. Residue threonine 471 is modified to Phosphothreonine; by PKC.

It in the C-terminal section; belongs to the phosphoglycerate mutase family. As to quaternary structure, homodimer. Forms a heterodimer with PFKFB2. In terms of processing, phosphorylation by AMPK stimulates activity.

The catalysed reaction is beta-D-fructose 2,6-bisphosphate + H2O = beta-D-fructose 6-phosphate + phosphate. The enzyme catalyses beta-D-fructose 6-phosphate + ATP = beta-D-fructose 2,6-bisphosphate + ADP + H(+). In terms of biological role, catalyzes both the synthesis and degradation of fructose 2,6-bisphosphate. The polypeptide is 6-phosphofructo-2-kinase/fructose-2,6-bisphosphatase 3 (PFKFB3) (Pongo abelii (Sumatran orangutan)).